Consider the following 334-residue polypeptide: Adenosine deaminase (334 aa).

Residues histidine 12 and histidine 14 each contribute to the Zn(2+) site. Substrate is bound by residues histidine 14, aspartate 16, and glycine 170. Position 197 (histidine 197) interacts with Zn(2+). Glutamate 200 functions as the Proton donor in the catalytic mechanism. Aspartate 278 contacts Zn(2+). Residue aspartate 279 coordinates substrate.

The protein belongs to the metallo-dependent hydrolases superfamily. Adenosine and AMP deaminases family. Adenosine deaminase subfamily. Requires Zn(2+) as cofactor.

It catalyses the reaction adenosine + H2O + H(+) = inosine + NH4(+). The enzyme catalyses 2'-deoxyadenosine + H2O + H(+) = 2'-deoxyinosine + NH4(+). Its function is as follows. Catalyzes the hydrolytic deamination of adenosine and 2-deoxyadenosine. This chain is Adenosine deaminase, found in Vibrio parahaemolyticus serotype O3:K6 (strain RIMD 2210633).